A 129-amino-acid chain; its full sequence is Small ribosomal subunit protein uS11 (129 aa).

It belongs to the universal ribosomal protein uS11 family. Part of the 30S ribosomal subunit. Interacts with proteins S7 and S18. Binds to IF-3.

Functionally, located on the platform of the 30S subunit, it bridges several disparate RNA helices of the 16S rRNA. Forms part of the Shine-Dalgarno cleft in the 70S ribosome. The protein is Small ribosomal subunit protein uS11 of Nitratidesulfovibrio vulgaris (strain ATCC 29579 / DSM 644 / CCUG 34227 / NCIMB 8303 / VKM B-1760 / Hildenborough) (Desulfovibrio vulgaris).